The primary structure comprises 183 residues: Adenine phosphoribosyltransferase (183 aa).

The protein belongs to the purine/pyrimidine phosphoribosyltransferase family. Homodimer.

Its subcellular location is the cytoplasm. The catalysed reaction is AMP + diphosphate = 5-phospho-alpha-D-ribose 1-diphosphate + adenine. It participates in purine metabolism; AMP biosynthesis via salvage pathway; AMP from adenine: step 1/1. Its function is as follows. Catalyzes a salvage reaction resulting in the formation of AMP, that is energically less costly than de novo synthesis. This Salmonella paratyphi C (strain RKS4594) protein is Adenine phosphoribosyltransferase.